Consider the following 112-residue polypeptide: M-myrmeciitoxin-Mp1 (112 aa).

Residues 1-26 (MKLSCLLLTLTIIFVLTIVHAPNVEA) form the signal peptide. Residues 27–56 (KDLADPESEAVGFADAFGEADAVGEADPNA) constitute a propeptide that is removed on maturation. Positions 57 to 78 (GLGSVFGRLARILGRVIPKVAK) are critical for cytotoxic activity. Positions 93–106 (KEAIPMAVEMAKSQ) are igE-binding determinant.

Belongs to the formicidae venom precursor-01 superfamily. Ant pilosulin family. As to expression, expressed by the venom gland.

It is found in the secreted. Has strong cytotoxic and hemolytic activities. Is more potent against mononuclear leukocytes than against granulocytes. The synthesized peptide 57-76 shows a potent and broad spectrum antimicrobial activity against both Gram-positive and Gram-negative bacteria, and also against the fungus C.albicans. Adopts an alpha-helical structure. The sequence is that of M-myrmeciitoxin-Mp1 from Myrmecia pilosula (Jack jumper ant).